The primary structure comprises 456 residues: Short chain dehydrogenase tazN (456 aa).

The NADP(+) site is built by V45, D99, N126, R160, Y195, K199, and T229. Y195 (proton donor) is an active-site residue. Residue K199 is the Lowers pKa of active site Tyr of the active site.

The protein belongs to the short-chain dehydrogenases/reductases (SDR) family.

The protein operates within secondary metabolite biosynthesis. Short chain dehydrogenase; part of the gene cluster that mediates the biosynthesis of azaterrilone A and other azaphilones, a class of fungal metabolites characterized by a highly oxygenated pyrano-quinone bicyclic core and exhibiting a broad range of bioactivities. The first step of the pathway begins with the non-reducing polyketide synthase tazA that assembles one acetyl-CoA starter unit, five malonyl-CoA units, and catalyzes a series of Claisen condensations, methylation, PT-mediated cyclization, and finally releases the first hexaketide precursor through the R-domain. The tazA product then undergoes reduction on its terminal ketone and the following pyran-ring formation by yet undetermined enzyme(s). Dehydration and enoyl reduction, possibly involving the trans-enoyl reductase tazE leads to the next intermediate. TazD is predicted as an acetyltransferase and might catalyze the acetylation steps leading to the synthesis of azaterrilone A. Azaterrilone A is not the final product of the taz pathway and both the highly reducing polyketide synthase tazB and the dual enzyme tazHJ catalyze late steps of the pathway, leading to the production of the 2 final stereoisomers that contain additional polyketide modification whose structures have still to be determined. This Aspergillus terreus (strain NIH 2624 / FGSC A1156) protein is Short chain dehydrogenase tazN.